Here is a 1169-residue protein sequence, read N- to C-terminus: Flocculation protein FLO10 (1169 aa).

Residues 1 to 24 form the signal peptide; the sequence is MPVAARYIFLTGLFLLSVANVALG. Residues 111–271 enclose the PA14 domain; the sequence is PVKRGVKLCS…GTEVNDDFEG (161 aa). Asn-122, Asn-157, and Asn-279 each carry an N-linked (GlcNAc...) asparagine glycan. 10 repeat units span residues 303-326, 330-356, 357-383, 384-419, 420-446, 447-482, 483-509, 510-545, 546-572, and 573-608. The segment at 303–572 is 6 X 27 AA approximate repeats, Ser/Thr-rich; sequence SSWSSSEVCT…TSYVTPYVSS (270 aa). Residues 384–608 are 4 X 36 AA approximate repeats, Ser/Thr-rich; it reads STAAANYTSS…TSTSTPYATS (225 aa). Asn-389 carries N-linked (GlcNAc...) asparagine glycosylation. The N-linked (GlcNAc...) asparagine glycan is linked to Asn-452. Residue Asn-515 is glycosylated (N-linked (GlcNAc...) asparagine). N-linked (GlcNAc...) asparagine glycans are attached at residues Asn-578, Asn-656, and Asn-686. Residues 798–819 show a composition bias toward low complexity; sequence TKVSSSESSESHRTSPTTSSES. 3 disordered regions span residues 798–837, 856–920, and 1070–1107; these read TKVSSSESSESHRTSPTTSSESGIKSSGVEIESTSTSSFS, TPSS…SRDR, and RNNNFVPTSGTTSIETHTTTTSNASENSDNVSASEAVS. The span at 856 to 884 shows a compositional bias: polar residues; that stretch reads TPSSPISTVAPRSTGLNSQTESTNSSKET. The N-linked (GlcNAc...) asparagine glycan is linked to Asn-879. The span at 886-902 shows a compositional bias: low complexity; that stretch reads SSENSASVMPSSSATSP. The span at 906-916 shows a compositional bias: polar residues; sequence KVTSDETSSGF. Positions 1077–1107 are enriched in low complexity; sequence TSGTTSIETHTTTTSNASENSDNVSASEAVS. N-linked (GlcNAc...) asparagine glycosylation is found at Asn-1092 and Asn-1099. A lipid anchor (GPI-anchor amidated glycine) is attached at Gly-1146. The propeptide at 1147 to 1169 is removed in mature form; it reads IANHLLTNSGISIFIASLLLAIV.

It belongs to the flocculin family. Extensively O-glycosylated. Post-translationally, the GPI-anchor is attached to the protein in the endoplasmic reticulum and serves to target the protein to the cell surface. There, the glucosamine-inositol phospholipid moiety is cleaved off and the GPI-modified mannoprotein is covalently attached via its lipidless GPI glycan remnant to the 1,6-beta-glucan of the outer cell wall layer.

It localises to the secreted. It is found in the cell wall. The protein resides in the membrane. Cell wall protein that participates directly in adhesive cell-cell interactions during yeast flocculation, a reversible, asexual and Ca(2+)-dependent process in which cells adhere to form aggregates (flocs) consisting of thousands of cells. The lectin-like protein sticks out of the cell wall of flocculent cells and selectively binds mannose residues in the cell walls of adjacent cells. Activity is inhibited by mannose, glucose, maltose and sucrose. Also involved in cell-substrate adhesion, haploid invasive growth and diploid pseudohyphae formation. This is Flocculation protein FLO10 (FLO10) from Saccharomyces cerevisiae (strain ATCC 204508 / S288c) (Baker's yeast).